Here is a 158-residue protein sequence, read N- to C-terminus: NADPH-dependent 7-cyano-7-deazaguanine reductase (158 aa).

Over residues 1–13 (MAKRSNTTMTSAG) the composition is skewed to polar residues. Residues 1 to 37 (MAKRSNTTMTSAGLQLGREVAPPDSPETAKLDRVPNP) form a disordered region. A compositionally biased stretch (basic and acidic residues) spans 27 to 37 (ETAKLDRVPNP). The active-site Thioimide intermediate is Cys-56. Asp-63 serves as the catalytic Proton donor. Residues 78 to 80 (VES) and 97 to 98 (HE) each bind substrate.

The protein belongs to the GTP cyclohydrolase I family. QueF type 1 subfamily.

The protein localises to the cytoplasm. It carries out the reaction 7-aminomethyl-7-carbaguanine + 2 NADP(+) = 7-cyano-7-deazaguanine + 2 NADPH + 3 H(+). It functions in the pathway tRNA modification; tRNA-queuosine biosynthesis. Its function is as follows. Catalyzes the NADPH-dependent reduction of 7-cyano-7-deazaguanine (preQ0) to 7-aminomethyl-7-deazaguanine (preQ1). The protein is NADPH-dependent 7-cyano-7-deazaguanine reductase of Bradyrhizobium sp. (strain ORS 278).